We begin with the raw amino-acid sequence, 262 residues long: Acyl-[acyl-carrier-protein]--UDP-N-acetylglucosamine O-acyltransferase (262 aa).

This sequence belongs to the transferase hexapeptide repeat family. LpxA subfamily. In terms of assembly, homotrimer.

It localises to the cytoplasm. It carries out the reaction a (3R)-hydroxyacyl-[ACP] + UDP-N-acetyl-alpha-D-glucosamine = a UDP-3-O-[(3R)-3-hydroxyacyl]-N-acetyl-alpha-D-glucosamine + holo-[ACP]. Its pathway is glycolipid biosynthesis; lipid IV(A) biosynthesis; lipid IV(A) from (3R)-3-hydroxytetradecanoyl-[acyl-carrier-protein] and UDP-N-acetyl-alpha-D-glucosamine: step 1/6. In terms of biological role, involved in the biosynthesis of lipid A, a phosphorylated glycolipid that anchors the lipopolysaccharide to the outer membrane of the cell. This chain is Acyl-[acyl-carrier-protein]--UDP-N-acetylglucosamine O-acyltransferase, found in Burkholderia lata (strain ATCC 17760 / DSM 23089 / LMG 22485 / NCIMB 9086 / R18194 / 383).